The chain runs to 265 residues: Undecaprenyl-diphosphatase (265 aa).

7 consecutive transmembrane segments (helical) span residues 38–58, 75–95, 108–128, 135–155, 181–201, 215–235, and 244–264; these read RSDF…CLAL, RDYV…GLIV, PVAW…HFAG, VVTW…GVFP, FVFM…LLEM, VAVA…WLLG, and VFAV…PAAA.

The protein belongs to the UppP family.

It localises to the cell inner membrane. It catalyses the reaction di-trans,octa-cis-undecaprenyl diphosphate + H2O = di-trans,octa-cis-undecaprenyl phosphate + phosphate + H(+). Catalyzes the dephosphorylation of undecaprenyl diphosphate (UPP). Confers resistance to bacitracin. In Xanthomonas euvesicatoria pv. vesicatoria (strain 85-10) (Xanthomonas campestris pv. vesicatoria), this protein is Undecaprenyl-diphosphatase.